We begin with the raw amino-acid sequence, 72 residues long: Small ribosomal subunit protein eS31 (72 aa).

Positions 32, 35, 51, and 54 each coordinate Zn(2+). Residues Cys-32–Cys-54 form a C4-type zinc finger.

It belongs to the eukaryotic ribosomal protein eS31 family. In terms of assembly, part of the 30S ribosomal subunit. Zn(2+) is required as a cofactor.

This Caldivirga maquilingensis (strain ATCC 700844 / DSM 13496 / JCM 10307 / IC-167) protein is Small ribosomal subunit protein eS31.